Here is a 265-residue protein sequence, read N- to C-terminus: Glycosylphosphatidylinositol anchor biosynthesis protein 11 (265 aa).

2 helical membrane-spanning segments follow: residues 49-69 and 79-99; these read LLVV…SGLT and GFLT…INLL. N111 and N112 each carry an N-linked (GlcNAc...) asparagine glycan. A run of 4 helical transmembrane segments spans residues 137-157, 166-186, 209-229, and 240-260; these read IFVS…MGAP, LYLS…LSNL, ILSS…PIPL, and ITLL…SLIV.

This sequence belongs to the PIGF family.

It localises to the endoplasmic reticulum membrane. Its pathway is glycolipid biosynthesis; glycosylphosphatidylinositol-anchor biosynthesis. Functionally, acts in the GPI biosynthetic pathway between GlcNAc-PI synthesis and GPI transfer to protein. The chain is Glycosylphosphatidylinositol anchor biosynthesis protein 11 (GPI11) from Candida albicans (strain SC5314 / ATCC MYA-2876) (Yeast).